Consider the following 650-residue polypeptide: Epithelial sodium channel subunit gamma (650 aa).

Residues 1 to 55 (MAPGEKIKAKIKKNLPVRGPQAPTIKDLMHWYCMNTNTHGCRRIVVSRGRLRRLL) lie on the Cytoplasmic side of the membrane. Residues 56–76 (WIAFTLTAVALIIWQCALLVF) form a helical membrane-spanning segment. Residues 77–542 (SFYTVSVSIK…GGQLGLWMSC (466 aa)) lie on the Extracellular side of the membrane. Disulfide bonds link cysteine 100–cysteine 284, cysteine 208–cysteine 215, cysteine 261–cysteine 268, cysteine 373–cysteine 458, cysteine 395–cysteine 454, cysteine 399–cysteine 450, cysteine 408–cysteine 435, and cysteine 410–cysteine 424. Positions 135–222 (RKRREAGSMP…SDCATYTFSS (88 aa)) are gating release of inhibition by proteolysis (GRIP); protease-sensitive region that is responsible for the proteolytic activation of the channel. Asparagine 210 is a glycosylation site (N-linked (GlcNAc...) asparagine). An N-linked (GlcNAc...) asparagine glycan is attached at asparagine 272. Asparagine 498 carries N-linked (GlcNAc...) asparagine glycosylation. The helical transmembrane segment at 543–563 (SVVCVIEIIEVFFIDFFSIIA) threads the bilayer. Topologically, residues 564–650 (RRQWHKAKDW…LTDTQLTNEL (87 aa)) are cytoplasmic. A disordered region spans residues 577–628 (RQTPPSTETPSSRQGQDNPALDTDDDLPTFTSAMRLPPAPGSTVPGTPPPRY). Residues 579 to 593 (TPPSTETPSSRQGQD) are compositionally biased toward polar residues. The PY motif; mediates interaction, ubiquitination and inhibition by NEDD4 and NEDD4L motif lies at 624–628 (PPPRY). A PY motif; recruits WW domain-containing proteins and is thereby required for ubiquitination and inhibition of the channel by NEDD4 and NEDD4L motif is present at residues 624–628 (PPPRY).

Belongs to the amiloride-sensitive sodium channel (TC 1.A.6) family. SCNN1G subfamily. Component of the heterotrimeric epithelial sodium channel (ENaC) composed of an alpha/SCNN1A, a beta/SCNN1B and a gamma/SCNN1G subunit. Interacts with WWP1 (via WW domains). Interacts with WWP2 (via WW domains); inhibits the channel. Interacts with the full-length immature form of PCSK9 (pro-PCSK9); inhibits ENaC by promoting its proteasomal degradation. Interacts with BPIFA1; the interaction is indirect via SCNN1B and inhibits the proteolytic maturation of SCNN1A and SCNN1G and the activation of ENaC. In terms of processing, phosphorylated on serine and threonine residues. Aldosterone and insulin increase the basal level of phosphorylation. Ubiquitinated. Can be ubiquitinated at multiple sites and undergo monoubiquitination and polyubiquitination. Ubiquitination by NEDD4 or NEDD4L inhibits the ENaC channel through endocytosis, intracellular retention and degradation of its individual subunits. Post-translationally, ENaC is activated through the proteolytic maturation of its subunits. Furin cleaves the SCNN1G subunit first, followed by cleavage by prostasin (PRSS8), which results in a stepwise increase in the open probability of the channel due to the release of an inhibitory tract. BPIFA1, which is recruited by the SCNN1B subunit, prevents the proteolytic activation of ENaC. In terms of processing, N-glycosylated. N-linked glycans are processed to complex type during ENaC complex assembly and transport to the plasma membrane.

It localises to the apical cell membrane. It catalyses the reaction Na(+)(in) = Na(+)(out). Originally identified and characterized by its inhibition by the diuretic drug amiloride. Functionally, this is one of the three pore-forming subunits of the heterotrimeric epithelial sodium channel (ENaC), a critical regulator of sodium balance and fluid homeostasis. ENaC operates in epithelial tissues, where it mediates the electrodiffusion of sodium ions from extracellular fluid through the apical membrane of cells, with water following osmotically. It plays a key role in maintaining sodium homeostasis through electrogenic sodium reabsorption in the kidneys. Additionally, ENaC is essential for airway surface liquid homeostasis, which is crucial for proper mucus clearance. The polypeptide is Epithelial sodium channel subunit gamma (Rattus norvegicus (Rat)).